Here is a 367-residue protein sequence, read N- to C-terminus: Gibberellin 20 oxidase 3 (367 aa).

Positions 198-304 (DGDPVMRLNH…RRSLTFFLNP (107 aa)) constitute a Fe2OG dioxygenase domain. Y208 provides a ligand contact to 2-oxoglutarate. Residues H223, D225, and H285 each contribute to the Fe cation site. 2 residues coordinate 2-oxoglutarate: R295 and S297.

The protein belongs to the iron/ascorbate-dependent oxidoreductase family. Fe(2+) is required as a cofactor. It depends on L-ascorbate as a cofactor.

The enzyme catalyses gibberellin A12 + 2 2-oxoglutarate + 3 O2 + H(+) = gibberellin A9 + 2 succinate + 3 CO2 + 2 H2O. The catalysed reaction is gibberellin A53 + 2 2-oxoglutarate + 3 O2 + H(+) = gibberellin A20 + 2 succinate + 3 CO2 + 2 H2O. Functionally, key oxidase enzyme in the biosynthesis of gibberellin. Catalyzes the formation of bioactive gibberellins (GAs) via a three-step oxidation at C-20 of the GA skeleton. Controls the elongation of the vegetative shoot and plant height by the regulation of active gibberellin levels. This Oryza sativa subsp. japonica (Rice) protein is Gibberellin 20 oxidase 3.